Consider the following 360-residue polypeptide: Photosystem II protein D1 (360 aa).

The Cytoplasmic segment spans residues 1–28 (MTTTLQRRESANLWERFCNWVTSTDNRL). The chain crosses the membrane as a helical span at residues 29–46 (YVGWFGVIMIPTLLAATI). The Lumenal segment spans residues 47–117 (CFVIAFIAAP…NGGPYQLIIF (71 aa)). His-118 is a binding site for chlorophyll a. Residues 118–133 (HFLLGASCYMGRQWEL) form a helical membrane-spanning segment. Pheophytin a is bound by residues Tyr-126 and Gln-130. Over 134-141 (SYRLGMRP) the chain is Cytoplasmic. Residues 142–156 (WICVAYSAPLASAFA) traverse the membrane as a helical segment. Residue Tyr-147 coordinates pheophytin a. The Lumenal portion of the chain corresponds to 157-196 (VFLIYPIGQGSFSDGMPLGISGTFNFMIVFQAEHNILMHP). Positions 170 and 189 each coordinate [CaMn4O5] cluster. Residues 197 to 218 (FHQLGVAGVFGGALFCAMHGSL) traverse the membrane as a helical segment. A chlorophyll a-binding site is contributed by His-198. Residue Met-214 participates in pheophytin a binding. Residues His-215 and 264–265 (SF) contribute to the a quinone site. His-215 provides a ligand contact to Fe cation. Residues 219 to 273 (VTSSLIRETTETESANYGYKFGQEEETYNIVAAHGYFGRLIFQYASFNNSRSLHF) lie on the Cytoplasmic side of the membrane. A Fe cation-binding site is contributed by His-272. Residues 274-288 (FLAAWRVVGVWFAAL) form a helical membrane-spanning segment. Over 289–360 (GISTMAFNLN…VAMIAPSING (72 aa)) the chain is Lumenal. Positions 332, 333, 342, and 344 each coordinate [CaMn4O5] cluster. A propeptide spanning residues 345-360 (SAESAPVAMIAPSING) is cleaved from the precursor.

It belongs to the reaction center PufL/M/PsbA/D family. As to quaternary structure, PSII is composed of 1 copy each of membrane proteins PsbA, PsbB, PsbC, PsbD, PsbE, PsbF, PsbH, PsbI, PsbJ, PsbK, PsbL, PsbM, PsbT, PsbX, PsbY, PsbZ, Psb30/Ycf12, peripheral proteins PsbO, CyanoQ (PsbQ), PsbU, PsbV and a large number of cofactors. It forms dimeric complexes. It depends on The D1/D2 heterodimer binds P680, chlorophylls that are the primary electron donor of PSII, and subsequent electron acceptors. It shares a non-heme iron and each subunit binds pheophytin, quinone, additional chlorophylls, carotenoids and lipids. D1 provides most of the ligands for the Mn4-Ca-O5 cluster of the oxygen-evolving complex (OEC). There is also a Cl(-1) ion associated with D1 and D2, which is required for oxygen evolution. The PSII complex binds additional chlorophylls, carotenoids and specific lipids. as a cofactor. C-terminally processed by CtpA; processing is essential to allow assembly of the oxygen-evolving complex and thus photosynthetic growth. In terms of processing, tyr-161 forms a radical intermediate that is referred to as redox-active TyrZ, YZ or Y-Z.

Its subcellular location is the cellular thylakoid membrane. It carries out the reaction 2 a plastoquinone + 4 hnu + 2 H2O = 2 a plastoquinol + O2. Functionally, photosystem II (PSII) is a light-driven water:plastoquinone oxidoreductase that uses light energy to abstract electrons from H(2)O, generating O(2) and a proton gradient subsequently used for ATP formation. It consists of a core antenna complex that captures photons, and an electron transfer chain that converts photonic excitation into a charge separation. The D1/D2 (PsbA/PsbD) reaction center heterodimer binds P680, the primary electron donor of PSII as well as several subsequent electron acceptors. This is Photosystem II protein D1 from Thermostichus vulcanus (Synechococcus vulcanus).